Reading from the N-terminus, the 192-residue chain is Orotate phosphoribosyltransferase 2 (192 aa).

116 to 124 (EDIVTTGLS) contacts 5-phospho-alpha-D-ribose 1-diphosphate. Orotate contacts are provided by Thr-120 and Arg-148.

It belongs to the purine/pyrimidine phosphoribosyltransferase family. PyrE subfamily. Homodimer. It depends on Mg(2+) as a cofactor.

The enzyme catalyses orotidine 5'-phosphate + diphosphate = orotate + 5-phospho-alpha-D-ribose 1-diphosphate. The protein operates within pyrimidine metabolism; UMP biosynthesis via de novo pathway; UMP from orotate: step 1/2. Its function is as follows. Catalyzes the transfer of a ribosyl phosphate group from 5-phosphoribose 1-diphosphate to orotate, leading to the formation of orotidine monophosphate (OMP). This chain is Orotate phosphoribosyltransferase 2, found in Mesorhizobium japonicum (strain LMG 29417 / CECT 9101 / MAFF 303099) (Mesorhizobium loti (strain MAFF 303099)).